Consider the following 321-residue polypeptide: uncharacterized protein (321 aa).

Residues 1-22 form the signal peptide; the sequence is MKSIYKYTFMLFVFLFGTLMMA.

It belongs to the bacterial solute-binding protein 1 family. WtpA subfamily.

This is an uncharacterized protein from Petrotoga mobilis (strain DSM 10674 / SJ95).